The following is a 463-amino-acid chain: Glutamate--tRNA ligase (463 aa).

The short motif at 8–18 (PSPTGYLHIGG) is the 'HIGH' region element. The 'KMSKS' region signature appears at 236–240 (RLSKR). Lysine 239 contributes to the ATP binding site.

The protein belongs to the class-I aminoacyl-tRNA synthetase family. Glutamate--tRNA ligase type 1 subfamily. Monomer.

The protein resides in the cytoplasm. The catalysed reaction is tRNA(Glu) + L-glutamate + ATP = L-glutamyl-tRNA(Glu) + AMP + diphosphate. Functionally, catalyzes the attachment of glutamate to tRNA(Glu) in a two-step reaction: glutamate is first activated by ATP to form Glu-AMP and then transferred to the acceptor end of tRNA(Glu). In Nitrosomonas eutropha (strain DSM 101675 / C91 / Nm57), this protein is Glutamate--tRNA ligase.